The primary structure comprises 117 residues: Large ribosomal subunit protein uL18 (117 aa).

This sequence belongs to the universal ribosomal protein uL18 family. In terms of assembly, part of the 50S ribosomal subunit; part of the 5S rRNA/L5/L18/L25 subcomplex. Contacts the 5S and 23S rRNAs.

Its function is as follows. This is one of the proteins that bind and probably mediate the attachment of the 5S RNA into the large ribosomal subunit, where it forms part of the central protuberance. The protein is Large ribosomal subunit protein uL18 of Francisella tularensis subsp. novicida (strain U112).